The chain runs to 91 residues: Probable Fe(2+)-trafficking protein (91 aa).

Belongs to the Fe(2+)-trafficking protein family.

In terms of biological role, could be a mediator in iron transactions between iron acquisition and iron-requiring processes, such as synthesis and/or repair of Fe-S clusters in biosynthetic enzymes. This chain is Probable Fe(2+)-trafficking protein, found in Burkholderia cenocepacia (strain ATCC BAA-245 / DSM 16553 / LMG 16656 / NCTC 13227 / J2315 / CF5610) (Burkholderia cepacia (strain J2315)).